Here is a 456-residue protein sequence, read N- to C-terminus: Histidinol dehydrogenase homolog (456 aa).

Histidine 279 is a Zn(2+) binding site. Active-site proton acceptor residues include glutamate 347 and histidine 348. Histidine 440 is a binding site for Zn(2+).

Belongs to the histidinol dehydrogenase family. The cofactor is Zn(2+).

The polypeptide is Histidinol dehydrogenase homolog (Rhizobium meliloti (strain 1021) (Ensifer meliloti)).